We begin with the raw amino-acid sequence, 553 residues long: Imidazole glycerol phosphate synthase hisHF (553 aa).

Residues 3-223 (TVHLLDYVAG…QLHSVTLEDS (221 aa)) enclose the Glutamine amidotransferase type-1 domain. Residues C81, H194, and E196 each act as for GATase activity in the active site. Positions 232–553 (LTRRIIACLD…FLVRRFEPDV (322 aa)) are cyclase. Active-site residues include D241 and D403.

It in the C-terminal section; belongs to the HisA/HisF family.

The enzyme catalyses 5-[(5-phospho-1-deoxy-D-ribulos-1-ylimino)methylamino]-1-(5-phospho-beta-D-ribosyl)imidazole-4-carboxamide + L-glutamine = D-erythro-1-(imidazol-4-yl)glycerol 3-phosphate + 5-amino-1-(5-phospho-beta-D-ribosyl)imidazole-4-carboxamide + L-glutamate + H(+). It carries out the reaction L-glutamine + H2O = L-glutamate + NH4(+). It participates in amino-acid biosynthesis; L-histidine biosynthesis; L-histidine from 5-phospho-alpha-D-ribose 1-diphosphate: step 5/9. Functionally, IGPS catalyzes the conversion of PRFAR and glutamine to IGP, AICAR and glutamate. The glutaminase domain produces the ammonia necessary for the cyclase domain to produce IGP and AICAR from PRFAR. The ammonia is channeled to the active site of the cyclase domain. The chain is Imidazole glycerol phosphate synthase hisHF (hisHF) from Emericella nidulans (strain FGSC A4 / ATCC 38163 / CBS 112.46 / NRRL 194 / M139) (Aspergillus nidulans).